An 874-amino-acid chain; its full sequence is Alanine--tRNA ligase (874 aa).

Positions 562, 566, 664, and 668 each coordinate Zn(2+).

This sequence belongs to the class-II aminoacyl-tRNA synthetase family. It depends on Zn(2+) as a cofactor.

It localises to the cytoplasm. It carries out the reaction tRNA(Ala) + L-alanine + ATP = L-alanyl-tRNA(Ala) + AMP + diphosphate. Functionally, catalyzes the attachment of alanine to tRNA(Ala) in a two-step reaction: alanine is first activated by ATP to form Ala-AMP and then transferred to the acceptor end of tRNA(Ala). Also edits incorrectly charged Ser-tRNA(Ala) and Gly-tRNA(Ala) via its editing domain. This chain is Alanine--tRNA ligase, found in Neisseria meningitidis serogroup C / serotype 2a (strain ATCC 700532 / DSM 15464 / FAM18).